Consider the following 75-residue polypeptide: Small ribosomal subunit protein bS18 (75 aa).

It belongs to the bacterial ribosomal protein bS18 family. As to quaternary structure, part of the 30S ribosomal subunit. Forms a tight heterodimer with protein bS6.

In terms of biological role, binds as a heterodimer with protein bS6 to the central domain of the 16S rRNA, where it helps stabilize the platform of the 30S subunit. This Shewanella amazonensis (strain ATCC BAA-1098 / SB2B) protein is Small ribosomal subunit protein bS18.